The following is a 762-amino-acid chain: Chondroadherin-like protein (762 aa).

The first 30 residues, 1–30 (MEGPRSSTHVPLVLPLLVLLLLAPARQAAA), serve as a signal peptide directing secretion. Positions 31-62 (QRCPQACICDNSRRHVACRYQNLTEVPDAIPE) constitute an LRRNT 1 domain. A glycan (N-linked (GlcNAc...) asparagine) is linked at N52. LRR repeat units lie at residues 87-108 (HLTH…AFRG), 111-132 (RLLL…ALDG), 135-156 (SLRR…TFGA), 159-180 (ALAT…AFQG), 183-204 (RVRW…ALAG), 207-228 (ALRR…VLSQ), 231-252 (GLAR…DGLA), 255-276 (GLRE…AFAH), and 279-300 (RLHT…QGPG). Positions 310–359 (NPLWCGCQARPLLEWLARARVRSDGACQGPRRLRGEALDALRPWDLRCPG) constitute an LRRCT 1 domain. Residues 364–390 (EEEELEERAVAGPRAPPRGPPRGPGEE) form a disordered region. The span at 377 to 386 (RAPPRGPPRG) shows a compositional bias: pro residues. The LRRNT 2 domain occupies 387–425 (PGEERAVAPCPRACVCVPESRHSSCEGCGLQAVPRGFPS). C396 and C411 are disulfide-bonded. LRR repeat units lie at residues 426 to 447 (DTQL…AFPG), 450 to 471 (HLVS…ALAG), 474 to 495 (RLIY…ALEG), 498 to 519 (RLGY…ALRA), 522 to 543 (SLFS…DLGR), 546 to 566 (ALRW…GALG), 570 to 591 (ELEK…ALEG), 594 to 615 (ALLE…AFQP), 619 to 640 (SLQH…AFSG), and 644 to 665 (GLQS…PSLS). N626 carries N-linked (GlcNAc...) asparagine glycosylation. The LRRCT 2 domain occupies 675–724 (NPFHCDCQLLPLHRWLTGLNLRVGATCATPPNARGQRVKAAAAVFEDCPG). 2 disulfide bridges follow: C679-C722 and C681-C701. The span at 728 to 745 (RKAKRTPASRPSARRTPI) shows a compositional bias: basic residues. Residues 728 to 762 (RKAKRTPASRPSARRTPIKGRQCGADKVGKEKGRL) form a disordered region.

It belongs to the small leucine-rich proteoglycan (SLRP) family. SLRP class IV subfamily. In terms of assembly, associates with collagen and binds to collagen fibrils.

The protein resides in the secreted. It is found in the extracellular space. It localises to the extracellular matrix. Potential negative modulator of chondrocyte differentiation. Inhibits collagen fibrillogenesis in vitro. May influence chondrocyte's differentiation by acting on its cellular collagenous microenvironment. The sequence is that of Chondroadherin-like protein (CHADL) from Homo sapiens (Human).